Here is a 157-residue protein sequence, read N- to C-terminus: 6,7-dimethyl-8-ribityllumazine synthase (157 aa).

5-amino-6-(D-ribitylamino)uracil-binding positions include phenylalanine 22, 56–58 (AME), and 80–82 (AVV). Residue 85–86 (ET) coordinates (2S)-2-hydroxy-3-oxobutyl phosphate. Histidine 88 acts as the Proton donor in catalysis. A 5-amino-6-(D-ribitylamino)uracil-binding site is contributed by phenylalanine 113. Arginine 127 serves as a coordination point for (2S)-2-hydroxy-3-oxobutyl phosphate.

This sequence belongs to the DMRL synthase family.

It catalyses the reaction (2S)-2-hydroxy-3-oxobutyl phosphate + 5-amino-6-(D-ribitylamino)uracil = 6,7-dimethyl-8-(1-D-ribityl)lumazine + phosphate + 2 H2O + H(+). It participates in cofactor biosynthesis; riboflavin biosynthesis; riboflavin from 2-hydroxy-3-oxobutyl phosphate and 5-amino-6-(D-ribitylamino)uracil: step 1/2. Catalyzes the formation of 6,7-dimethyl-8-ribityllumazine by condensation of 5-amino-6-(D-ribitylamino)uracil with 3,4-dihydroxy-2-butanone 4-phosphate. This is the penultimate step in the biosynthesis of riboflavin. This Levilactobacillus brevis (strain ATCC 367 / BCRC 12310 / CIP 105137 / JCM 1170 / LMG 11437 / NCIMB 947 / NCTC 947) (Lactobacillus brevis) protein is 6,7-dimethyl-8-ribityllumazine synthase.